Consider the following 622-residue polypeptide: Deoxynucleoside triphosphate triphosphohydrolase SAMHD1 (622 aa).

Positions 26 to 89 constitute an SAM domain; that stretch reads WDVEDTVAYL…LHCLQKLSQI (64 aa). 2 residues coordinate GTP: Lys-95 and Val-96. Asn-98 contacts dGTP. GTP is bound by residues Asp-116, Gln-121, and Arg-124. Positions 128, 129, 135, and 143 each coordinate dGTP. Gln-128 is a binding site for dATP. Residue Gln-128 coordinates dCTP. DTTP is bound at residue Gln-128. A dATP-binding site is contributed by Arg-143. Residue Arg-143 coordinates dCTP. Arg-143 is a binding site for dTTP. An HD domain is found at 143 to 296; the sequence is RFEHSIGVGY…GIDVDKWDYF (154 aa). His-146, His-185, and Asp-186 together coordinate Mn(2+). DATP contacts are provided by His-189 and His-194. The dCTP site is built by His-189 and His-194. Positions 189 and 194 each coordinate dTTP. The active site involves His-212. Asp-291 is a Mn(2+) binding site. DGTP-binding residues include Lys-292, Tyr-295, Asp-299, Arg-313, Arg-332, Lys-334, Asn-338, Arg-346, Tyr-354, Gln-355, His-356, and Lys-357. Residues Lys-292, Tyr-295, and Asp-299 each coordinate dATP. The dCTP site is built by Lys-292, Tyr-295, and Asp-299. Residues Lys-292, Tyr-295, and Asp-299 each contribute to the dTTP site. Residue Arg-346 participates in dATP binding. A dCTP-binding site is contributed by Arg-346. DATP is bound at residue Gln-355. Gln-355 is a dCTP binding site. Gln-355 provides a ligand contact to dTTP. Residues Arg-431, Lys-435, and Lys-502 each coordinate GTP. Lys-502 lines the dGTP pocket. Positions 571 to 622 are disordered; sequence TPLKQDWHAREDEDEEEEEKHRQNQTLPHHTPQRTGRNVKVDLFQARGETKL. The span at 594-606 shows a compositional bias: polar residues; it reads NQTLPHHTPQRTG.

The protein belongs to the SAMHD1 family. In terms of assembly, homodimer; in absence of GTP and dNTP. Homotetramer; in GTP- and dNTP-bound form. Interacts with rbbp8/CtIP. Zn(2+) serves as cofactor.

The protein resides in the nucleus. It localises to the chromosome. The enzyme catalyses a 2'-deoxyribonucleoside 5'-triphosphate + H2O = a 2'-deoxyribonucleoside + triphosphate + H(+). It catalyses the reaction dATP + H2O = 2'-deoxyadenosine + triphosphate + H(+). It carries out the reaction dCTP + H2O = 2'-deoxycytidine + triphosphate + H(+). The catalysed reaction is dGTP + H2O = 2'-deoxyguanosine + triphosphate + H(+). The enzyme catalyses dTTP + H2O = thymidine + triphosphate + H(+). Its activity is regulated as follows. Allosterically activated and regulated via the combined actions of GTP and dNTPs (dATP, dGTP, dTTP and dCTP): Allosteric site 1 binds GTP, while allosteric site 2 binds dNTP. Allosteric activation promotes the formation of highly active homotetramers. Its function is as follows. Protein that acts both as a host restriction factor involved in defense response to virus and as a regulator of DNA end resection at stalled replication forks. Has deoxynucleoside triphosphate (dNTPase) activity, which is required to restrict infection by viruses: dNTPase activity reduces cellular dNTP levels to levels too low for retroviral reverse transcription to occur, blocking early-stage virus replication in dendritic and other myeloid cells. Functions during S phase at stalled DNA replication forks to promote the resection of gapped or reversed forks: acts by stimulating the exonuclease activity of MRE11, activating the ATR-CHK1 pathway and allowing the forks to restart replication. Its ability to promote degradation of nascent DNA at stalled replication forks is required to prevent induction of type I interferons, thereby preventing chronic inflammation. Ability to promote DNA end resection at stalled replication forks is independent of dNTPase activity. This chain is Deoxynucleoside triphosphate triphosphohydrolase SAMHD1, found in Danio rerio (Zebrafish).